The primary structure comprises 105 residues: Pyrimidine/purine nucleoside phosphorylase (105 aa).

This sequence belongs to the nucleoside phosphorylase PpnP family.

It carries out the reaction a purine D-ribonucleoside + phosphate = a purine nucleobase + alpha-D-ribose 1-phosphate. The catalysed reaction is adenosine + phosphate = alpha-D-ribose 1-phosphate + adenine. It catalyses the reaction cytidine + phosphate = cytosine + alpha-D-ribose 1-phosphate. The enzyme catalyses guanosine + phosphate = alpha-D-ribose 1-phosphate + guanine. It carries out the reaction inosine + phosphate = alpha-D-ribose 1-phosphate + hypoxanthine. The catalysed reaction is thymidine + phosphate = 2-deoxy-alpha-D-ribose 1-phosphate + thymine. It catalyses the reaction uridine + phosphate = alpha-D-ribose 1-phosphate + uracil. The enzyme catalyses xanthosine + phosphate = alpha-D-ribose 1-phosphate + xanthine. Its function is as follows. Catalyzes the phosphorolysis of diverse nucleosides, yielding D-ribose 1-phosphate and the respective free bases. Can use uridine, adenosine, guanosine, cytidine, thymidine, inosine and xanthosine as substrates. Also catalyzes the reverse reactions. This Cupriavidus necator (strain ATCC 17699 / DSM 428 / KCTC 22496 / NCIMB 10442 / H16 / Stanier 337) (Ralstonia eutropha) protein is Pyrimidine/purine nucleoside phosphorylase.